The chain runs to 185 residues: Ribosome-recycling factor (185 aa).

The protein belongs to the RRF family.

The protein resides in the cytoplasm. Responsible for the release of ribosomes from messenger RNA at the termination of protein biosynthesis. May increase the efficiency of translation by recycling ribosomes from one round of translation to another. Functionally, plays a role in sporulation. The sequence is that of Ribosome-recycling factor from Bacillus subtilis (strain 168).